The following is a 66-amino-acid chain: Large ribosomal subunit protein bL33c (66 aa).

It belongs to the bacterial ribosomal protein bL33 family.

Its subcellular location is the plastid. The protein resides in the chloroplast. In Nasturtium officinale (Watercress), this protein is Large ribosomal subunit protein bL33c.